A 225-amino-acid chain; its full sequence is Large ribosomal subunit protein uL1 (225 aa).

The protein belongs to the universal ribosomal protein uL1 family. In terms of assembly, part of the 50S ribosomal subunit.

Binds directly to 23S rRNA. The L1 stalk is quite mobile in the ribosome, and is involved in E site tRNA release. In terms of biological role, protein L1 is also a translational repressor protein, it controls the translation of the L11 operon by binding to its mRNA. The chain is Large ribosomal subunit protein uL1 from Rhodopirellula baltica (strain DSM 10527 / NCIMB 13988 / SH1).